A 329-amino-acid chain; its full sequence is Phosphate acyltransferase (329 aa).

This sequence belongs to the PlsX family. As to quaternary structure, homodimer. Probably interacts with PlsY.

The protein localises to the cytoplasm. It carries out the reaction a fatty acyl-[ACP] + phosphate = an acyl phosphate + holo-[ACP]. Its pathway is lipid metabolism; phospholipid metabolism. In terms of biological role, catalyzes the reversible formation of acyl-phosphate (acyl-PO(4)) from acyl-[acyl-carrier-protein] (acyl-ACP). This enzyme utilizes acyl-ACP as fatty acyl donor, but not acyl-CoA. The sequence is that of Phosphate acyltransferase from Exiguobacterium sp. (strain ATCC BAA-1283 / AT1b).